Consider the following 292-residue polypeptide: Elongation factor Ts (292 aa).

An involved in Mg(2+) ion dislocation from EF-Tu region spans residues 80–83; sequence TDFV.

This sequence belongs to the EF-Ts family.

The protein resides in the cytoplasm. Its function is as follows. Associates with the EF-Tu.GDP complex and induces the exchange of GDP to GTP. It remains bound to the aminoacyl-tRNA.EF-Tu.GTP complex up to the GTP hydrolysis stage on the ribosome. The protein is Elongation factor Ts of Tolumonas auensis (strain DSM 9187 / NBRC 110442 / TA 4).